The primary structure comprises 342 residues: Dihydroorotate dehydrogenase (quinone) (342 aa).

FMN is bound by residues 61-65 (AGLDK) and Thr-85. Lys-65 contributes to the substrate binding site. 110 to 114 (NRMGF) is a binding site for substrate. 2 residues coordinate FMN: Asn-138 and Asn-171. Asn-171 contacts substrate. Ser-174 functions as the Nucleophile in the catalytic mechanism. Asn-176 provides a ligand contact to substrate. FMN contacts are provided by Lys-216 and Thr-244. 245–246 (NT) provides a ligand contact to substrate. FMN-binding positions include Gly-267, Gly-296, and 317 to 318 (YS).

The protein belongs to the dihydroorotate dehydrogenase family. Type 2 subfamily. As to quaternary structure, monomer. FMN serves as cofactor.

The protein localises to the cell membrane. It catalyses the reaction (S)-dihydroorotate + a quinone = orotate + a quinol. The protein operates within pyrimidine metabolism; UMP biosynthesis via de novo pathway; orotate from (S)-dihydroorotate (quinone route): step 1/1. Functionally, catalyzes the conversion of dihydroorotate to orotate with quinone as electron acceptor. This Pseudomonas paraeruginosa (strain DSM 24068 / PA7) (Pseudomonas aeruginosa (strain PA7)) protein is Dihydroorotate dehydrogenase (quinone).